A 447-amino-acid chain; its full sequence is Phosphoglucosamine mutase (447 aa).

Ser102 serves as the catalytic Phosphoserine intermediate. 4 residues coordinate Mg(2+): Ser102, Asp241, Asp243, and Asp245. Ser102 is subject to Phosphoserine.

Belongs to the phosphohexose mutase family. The cofactor is Mg(2+). Post-translationally, activated by phosphorylation.

It catalyses the reaction alpha-D-glucosamine 1-phosphate = D-glucosamine 6-phosphate. Catalyzes the conversion of glucosamine-6-phosphate to glucosamine-1-phosphate. The chain is Phosphoglucosamine mutase from Symbiobacterium thermophilum (strain DSM 24528 / JCM 14929 / IAM 14863 / T).